Here is a 314-residue protein sequence, read N- to C-terminus: Protein translocase subunit SecF (314 aa).

6 helical membrane-spanning segments follow: residues 17–37 (AVAVSAILVAIALISMGTRGL), 137–157 (QGTYAILYALLAIVAYIWWRY), 158–178 (ELNFGVAAVIALVHDVVITLG), 188–210 (SLPVLAAILTVIGYSLNDTIVVF), 250–270 (TLIVVAVLYFFGGEVINGFAF), and 272–292 (LLVGIIVGTYSSIFVASLLLV).

This sequence belongs to the SecD/SecF family. SecF subfamily. In terms of assembly, forms a complex with SecD. Part of the essential Sec protein translocation apparatus which comprises SecA, SecYEG and auxiliary proteins SecDF. Other proteins may also be involved.

Its subcellular location is the cell inner membrane. Part of the Sec protein translocase complex. Interacts with the SecYEG preprotein conducting channel. SecDF uses the proton motive force (PMF) to complete protein translocation after the ATP-dependent function of SecA. The protein is Protein translocase subunit SecF of Desulfurispirillum indicum (strain ATCC BAA-1389 / DSM 22839 / S5).